Consider the following 45-residue polypeptide: Small polypeptide DEVIL 23 (45 aa).

Residues 13–44 form a required for DVL/RTFL small polypeptide activity region; that stretch reads KSTLRCWDWCKEQRTRAYIIWRCLIFLLRWDD. The chain crosses the membrane as a helical span at residues 22-39; the sequence is CKEQRTRAYIIWRCLIFL.

This sequence belongs to the DVL/RTFL small polypeptides family.

It is found in the cell membrane. In terms of biological role, small polypeptide acting as a regulatory molecule which coordinates cellular responses required for differentiation, growth and development, probably by restricting polar cell proliferation in lateral organs and coordinating socket cell recruitment and differentiation at trichome sites. In Arabidopsis thaliana (Mouse-ear cress), this protein is Small polypeptide DEVIL 23.